The sequence spans 61 residues: Small ribosomal subunit protein uS14 (61 aa).

Residues C24, C27, C40, and C43 each coordinate Zn(2+).

This sequence belongs to the universal ribosomal protein uS14 family. Zinc-binding uS14 subfamily. As to quaternary structure, part of the 30S ribosomal subunit. Contacts proteins S3 and S10. Zn(2+) serves as cofactor.

Functionally, binds 16S rRNA, required for the assembly of 30S particles and may also be responsible for determining the conformation of the 16S rRNA at the A site. The protein is Small ribosomal subunit protein uS14 of Streptococcus thermophilus (strain ATCC BAA-491 / LMD-9).